The sequence spans 365 residues: Chorismate synthase (365 aa).

Residues Arg-48 and Arg-54 each contribute to the NADP(+) site. Residues 125–127, 237–238, Gly-277, 292–296, and Arg-318 each bind FMN; these read RAS, NA, and KPTSS.

Belongs to the chorismate synthase family. In terms of assembly, homotetramer. Requires FMNH2 as cofactor.

The catalysed reaction is 5-O-(1-carboxyvinyl)-3-phosphoshikimate = chorismate + phosphate. It functions in the pathway metabolic intermediate biosynthesis; chorismate biosynthesis; chorismate from D-erythrose 4-phosphate and phosphoenolpyruvate: step 7/7. Functionally, catalyzes the anti-1,4-elimination of the C-3 phosphate and the C-6 proR hydrogen from 5-enolpyruvylshikimate-3-phosphate (EPSP) to yield chorismate, which is the branch point compound that serves as the starting substrate for the three terminal pathways of aromatic amino acid biosynthesis. This reaction introduces a second double bond into the aromatic ring system. In Polaromonas sp. (strain JS666 / ATCC BAA-500), this protein is Chorismate synthase.